The primary structure comprises 328 residues: Nickel import system permease protein NikB (328 aa).

Helical transmembrane passes span 11-31, 104-124, 139-159, 170-190, 229-249, and 279-299; these read LMQM…LMKL, LLIS…LGII, VIST…LLFI, ILSQ…AYII, ILPI…GTVV, and VLFI…LTLL. One can recognise an ABC transmembrane type-1 domain in the interval 100-297; sequence APITLLISFS…IINTIADLLT (198 aa).

This sequence belongs to the binding-protein-dependent transport system permease family. OppBC subfamily. The complex is composed of two ATP-binding proteins (NikD and NikE), two transmembrane proteins (NikB and NikC) and a solute-binding protein (NikA).

The protein resides in the cell membrane. Functionally, part of the ABC transporter complex NikABCDE (Opp2) involved in nickel import. Probably responsible for the translocation of the substrate across the membrane. This chain is Nickel import system permease protein NikB, found in Staphylococcus aureus (strain USA300).